The following is a 226-amino-acid chain: MLLHIPALFEKDEVRRIREALEQADWADGKITAGYQSAKAKHNLQLPEGHPLAKEIGAAMLERLWKNPLFMSAALPHKVFPPLLNCYTAGGSFDFHIDNAVRQPKGSIERVRTDLSATLFFSEPEDYDGGELEIQDTFGTQRVKLPAGDMVLYPGTSLHKVNAVTRGARYASFFWTQSLVREDSQRALLFEMDGAIQQLTHDMPDHPSLIRLTGTYHNLLRRWVEV.

The Fe2OG dioxygenase domain occupies 78-178; sequence KVFPPLLNCY…RYASFFWTQS (101 aa). Fe cation-binding residues include H96, D98, and H159. R169 contacts 2-oxoglutarate.

Requires Fe(2+) as cofactor. L-ascorbate serves as cofactor.

This is PKHD-type hydroxylase Pfl01_0799 from Pseudomonas fluorescens (strain Pf0-1).